We begin with the raw amino-acid sequence, 214 residues long: Pyrrolidone-carboxylate peptidase (214 aa).

Active-site residues include glutamate 78, cysteine 141, and histidine 165.

Belongs to the peptidase C15 family. Homotetramer.

The protein resides in the cytoplasm. It catalyses the reaction Release of an N-terminal pyroglutamyl group from a polypeptide, the second amino acid generally not being Pro.. Its function is as follows. Removes 5-oxoproline from various penultimate amino acid residues except L-proline. The sequence is that of Pyrrolidone-carboxylate peptidase from Streptococcus pneumoniae (strain 70585).